A 330-amino-acid polypeptide reads, in one-letter code: Ribosomal RNA small subunit methyltransferase H (330 aa).

S-adenosyl-L-methionine contacts are provided by residues 51-53 (GGH), D70, D118, and Q125. The disordered stretch occupies residues 276–330 (STDSTPPGLPVPLPDRQPELRLLTRGAELPTEQETAANPRAASARLRAAERTREP). A compositionally biased stretch (low complexity) spans 311 to 321 (AANPRAASARL).

The protein belongs to the methyltransferase superfamily. RsmH family.

Its subcellular location is the cytoplasm. The catalysed reaction is cytidine(1402) in 16S rRNA + S-adenosyl-L-methionine = N(4)-methylcytidine(1402) in 16S rRNA + S-adenosyl-L-homocysteine + H(+). Specifically methylates the N4 position of cytidine in position 1402 (C1402) of 16S rRNA. In Thermobifida fusca (strain YX), this protein is Ribosomal RNA small subunit methyltransferase H.